Here is a 423-residue protein sequence, read N- to C-terminus: Glycine amidinotransferase, mitochondrial (423 aa).

The N-terminal 43 residues, 1–43, are a transit peptide targeting the mitochondrion; that stretch reads MLRVRCLRGGSRGAEALHYIGSRLGRTVTGWVQRTFQSTQAAT. 2 positions are modified to phosphoserine: serine 46 and serine 49. Aspartate 170 contributes to the arginine binding site. Active-site residues include aspartate 254 and histidine 303. Arginine contacts are provided by aspartate 305, arginine 322, serine 354, and serine 355. Residue lysine 385 is modified to N6-acetyllysine. Cysteine 407 functions as the Amidino-cysteine intermediate in the catalytic mechanism.

This sequence belongs to the amidinotransferase family. As to quaternary structure, homodimer.

The protein localises to the mitochondrion inner membrane. The catalysed reaction is L-arginine + glycine = guanidinoacetate + L-ornithine. It carries out the reaction 4-aminobutanoate + L-arginine = 4-guanidinobutanoate + L-ornithine. The enzyme catalyses beta-alanine + L-arginine = 3-guanidinopropanoate + L-ornithine. It catalyses the reaction taurine + L-arginine = taurocyamine + L-ornithine. It participates in amine and polyamine biosynthesis; creatine biosynthesis; creatine from L-arginine and glycine: step 1/2. Functionally, transamidinase that catalyzes the transfer of the amidino group of L-arginine onto the amino moiety of acceptor metabolites such as glycine, beta-alanine, gamma-aminobutyric acid (GABA) and taurine yielding the corresponding guanidine derivatives. Catalyzes the rate-limiting step of creatine biosynthesis, namely the transfer of the amidino group from L-arginine to glycine to generate guanidinoacetate, which is then methylated by GAMT to form creatine. Provides creatine as a source for ATP generation in tissues with high energy demands, in particular skeletal muscle, heart and brain. The sequence is that of Glycine amidinotransferase, mitochondrial (GATM) from Bos taurus (Bovine).